The primary structure comprises 147 residues: MLLVGSGAKFVQQLEQAGALAIYVTPEGGSEGHYLRRLRGAGYEVVTLSSKGIGDLASYLTRIHGVRPATLGKSERRTYFFPALIEQYRATLPPKAKGLVFWFYEGHVFSQQELSYLVKLSREDKGVKFVVELGRERSIRWQPLQSA.

It belongs to the complex I NdhN subunit family. As to quaternary structure, NDH-1 can be composed of about 15 different subunits; different subcomplexes with different compositions have been identified which probably have different functions.

It is found in the cellular thylakoid membrane. The enzyme catalyses a plastoquinone + NADH + (n+1) H(+)(in) = a plastoquinol + NAD(+) + n H(+)(out). It carries out the reaction a plastoquinone + NADPH + (n+1) H(+)(in) = a plastoquinol + NADP(+) + n H(+)(out). NDH-1 shuttles electrons from an unknown electron donor, via FMN and iron-sulfur (Fe-S) centers, to quinones in the respiratory and/or the photosynthetic chain. The immediate electron acceptor for the enzyme in this species is believed to be plastoquinone. Couples the redox reaction to proton translocation, and thus conserves the redox energy in a proton gradient. Cyanobacterial NDH-1 also plays a role in inorganic carbon-concentration. The chain is NAD(P)H-quinone oxidoreductase subunit N from Synechococcus sp. (strain JA-2-3B'a(2-13)) (Cyanobacteria bacterium Yellowstone B-Prime).